Reading from the N-terminus, the 176-residue chain is 2-C-methyl-D-erythritol 2,4-cyclodiphosphate synthase (176 aa).

Aspartate 23, histidine 25, and histidine 60 together coordinate a divalent metal cation. Residue 23–25 (DSH) participates in 4-CDP-2-C-methyl-D-erythritol 2-phosphate binding. 149–152 (TSGE) provides a ligand contact to 4-CDP-2-C-methyl-D-erythritol 2-phosphate.

It belongs to the IspF family. As to quaternary structure, homotrimer. It depends on a divalent metal cation as a cofactor.

It carries out the reaction 4-CDP-2-C-methyl-D-erythritol 2-phosphate = 2-C-methyl-D-erythritol 2,4-cyclic diphosphate + CMP. The protein operates within isoprenoid biosynthesis; isopentenyl diphosphate biosynthesis via DXP pathway; isopentenyl diphosphate from 1-deoxy-D-xylulose 5-phosphate: step 4/6. In terms of biological role, involved in the biosynthesis of isopentenyl diphosphate (IPP) and dimethylallyl diphosphate (DMAPP), two major building blocks of isoprenoid compounds. Catalyzes the conversion of 4-diphosphocytidyl-2-C-methyl-D-erythritol 2-phosphate (CDP-ME2P) to 2-C-methyl-D-erythritol 2,4-cyclodiphosphate (ME-CPP) with a corresponding release of cytidine 5-monophosphate (CMP). The polypeptide is 2-C-methyl-D-erythritol 2,4-cyclodiphosphate synthase (Chlamydia caviae (strain ATCC VR-813 / DSM 19441 / 03DC25 / GPIC) (Chlamydophila caviae)).